The primary structure comprises 296 residues: Protease HtpX homolog (296 aa).

2 helical membrane-spanning segments follow: residues 14 to 34 (VFLL…VGYL) and 38 to 58 (SLVT…VIMI). His144 is a Zn(2+) binding site. Glu145 is a catalytic residue. His148 provides a ligand contact to Zn(2+). Helical transmembrane passes span 159-179 (IALA…NWWL) and 198-218 (LLVF…AAVI). Glu227 contacts Zn(2+).

It belongs to the peptidase M48B family. Zn(2+) serves as cofactor.

It localises to the cell membrane. This chain is Protease HtpX homolog, found in Leuconostoc citreum (strain KM20).